The primary structure comprises 141 residues: Hemoglobin subunit alpha-2 (141 aa).

One can recognise a Globin domain in the interval 1–141 (VLSPADKNNV…VSTVLTSKYR (141 aa)). His-58 serves as a coordination point for O2. Residue His-87 coordinates heme b.

Belongs to the globin family. Heterotetramer of two alpha chains and two beta chains. In terms of tissue distribution, red blood cells.

In terms of biological role, involved in oxygen transport from the lung to the various peripheral tissues. This is Hemoglobin subunit alpha-2 from Varecia variegata (Black-and-white ruffed lemur).